A 393-amino-acid chain; its full sequence is MTWKTLDDMALDGKIVLTRVDINVPVADGVVTDTTRIERIVPTVTDILAKGGLPVLLAHFGRPKGKVVPEMSLRVVLPALEEALGRPVEFIAHPDRAALEALPKCTVVLAENTRFAPGEEKNDPEMAAALAALGDIYCNDAFSAAHRAHASTEGIARLLPSCAGRLMQAELEALQRALGTPTRPVVAVVGGAKVSTKLALLGNLVEKVDDLVIGGGMANTFLAAQGIDVGASLAEHEMADTAREIMEKAARAGCSIHLPKDIVVARKFEAGAPSQTLPVSECPRDAMILDAGPETVAALKEVFAQARTLIWNGPLGAFEIPPFDMATNAAARAAADATKAGTLITVAGGGDTVAALNKAGVADDFTYISTAGGAFLEWMEGKTLPGVAALEAA.

Substrate is bound by residues 21–23, R36, 59–62, R114, and R147; these read DIN and HFGR. ATP-binding positions include K197, E319, and 349 to 352; that span reads GGDT.

It belongs to the phosphoglycerate kinase family. As to quaternary structure, monomer.

The protein localises to the cytoplasm. The catalysed reaction is (2R)-3-phosphoglycerate + ATP = (2R)-3-phospho-glyceroyl phosphate + ADP. It functions in the pathway carbohydrate degradation; glycolysis; pyruvate from D-glyceraldehyde 3-phosphate: step 2/5. The sequence is that of Phosphoglycerate kinase from Dinoroseobacter shibae (strain DSM 16493 / NCIMB 14021 / DFL 12).